A 116-amino-acid polypeptide reads, in one-letter code: Cyclin-dependent protein kinase inhibitor SMR9 (116 aa).

Positions 1–22 are enriched in basic residues; the sequence is MASKGKKPLRRTTTRRRKRSHF. Residues 1–62 form a disordered region; it reads MASKGKKPLR…PVSAESGCCT (62 aa). Residues 35–56 are compositionally biased toward low complexity; that stretch reads VTSTSSTSTSPTSTATPSPVSA.

Functionally, probable cyclin-dependent protein kinase (CDK) inhibitor that functions as a repressor of mitosis in the endoreduplication cell cycle. This chain is Cyclin-dependent protein kinase inhibitor SMR9, found in Arabidopsis thaliana (Mouse-ear cress).